The primary structure comprises 277 residues: Diaminopimelate epimerase (277 aa).

Substrate contacts are provided by Asn11 and Asn62. The Proton donor role is filled by Cys71. Residues 72 to 73 (GN), Asn160, Asn193, and 211 to 212 (ER) each bind substrate. Cys220 (proton acceptor) is an active-site residue. Substrate is bound at residue 221-222 (GT).

Belongs to the diaminopimelate epimerase family. In terms of assembly, homodimer.

It localises to the cytoplasm. The enzyme catalyses (2S,6S)-2,6-diaminopimelate = meso-2,6-diaminopimelate. It functions in the pathway amino-acid biosynthesis; L-lysine biosynthesis via DAP pathway; DL-2,6-diaminopimelate from LL-2,6-diaminopimelate: step 1/1. Its function is as follows. Catalyzes the stereoinversion of LL-2,6-diaminopimelate (L,L-DAP) to meso-diaminopimelate (meso-DAP), a precursor of L-lysine. The sequence is that of Diaminopimelate epimerase from Methanococcus maripaludis (strain DSM 14266 / JCM 13030 / NBRC 101832 / S2 / LL).